A 270-amino-acid polypeptide reads, in one-letter code: Type III pantothenate kinase (270 aa).

An ATP-binding site is contributed by 6 to 13; that stretch reads DAGNTNIV. 107–110 is a substrate binding site; that stretch reads GADR. The Proton acceptor role is filled by D109. D129 contributes to the K(+) binding site. Residue T132 participates in ATP binding. T184 is a substrate binding site.

It belongs to the type III pantothenate kinase family. Homodimer. Requires NH4(+) as cofactor. K(+) serves as cofactor.

The protein resides in the cytoplasm. The catalysed reaction is (R)-pantothenate + ATP = (R)-4'-phosphopantothenate + ADP + H(+). The protein operates within cofactor biosynthesis; coenzyme A biosynthesis; CoA from (R)-pantothenate: step 1/5. Catalyzes the phosphorylation of pantothenate (Pan), the first step in CoA biosynthesis. In Gluconobacter oxydans (strain 621H) (Gluconobacter suboxydans), this protein is Type III pantothenate kinase.